The following is a 414-amino-acid chain: Membrane protein UL43 (414 aa).

The next 6 membrane-spanning stretches (helical) occupy residues 39-59 (GFAHLWLQAATLGFVGSVVLS), 61-81 (GPYADAMSGAFVIGSTGLGFL), 96-116 (AWLRLVGGGAAVALWSLGEAG), 121-141 (VPGPATQCLALGAAYAALLVL), 148-168 (LFLLAPRPLFVGTLGVVVGGL), and 184-204 (AAALTAAVVAGLGTTAAGDSF). A disordered region spans residues 225 to 253 (PRYAPEDAERPTDHGPLLPSTHHQRSPRV). The span at 228 to 237 (APEDAERPTD) shows a compositional bias: basic and acidic residues. The next 2 membrane-spanning stretches (helical) occupy residues 339 to 359 (GLMFVVPDIAVYAMLGGAVWI) and 383 to 403 (ATLRGLFFSVYALGFAAGVLV).

The protein belongs to the alphaherpesvirinae HHV-1 UL43 family.

The protein resides in the membrane. This Homo sapiens (Human) protein is Membrane protein UL43.